A 66-amino-acid chain; its full sequence is Large ribosomal subunit protein bL33B (66 aa).

The protein belongs to the bacterial ribosomal protein bL33 family.

This Synechococcus sp. (strain CC9605) protein is Large ribosomal subunit protein bL33B.